The chain runs to 305 residues: Serine/threonine-protein phosphatase 4 catalytic subunit (305 aa).

Residues aspartate 52, histidine 54, aspartate 80, and asparagine 112 each contribute to the Mn(2+) site. Catalysis depends on histidine 113, which acts as the Proton donor. Residues histidine 162 and histidine 236 each contribute to the Mn(2+) site.

The protein belongs to the PPP phosphatase family. PP-4 (PP-X) subfamily. As to quaternary structure, serine/threonine-protein phosphatase 4 (PP4) occurs in different assemblies of the catalytic and one or more regulatory subunits. Probably part of a PP4 complex containing ppp4c and ppp4r2. Interacts with smkA. Mn(2+) is required as a cofactor.

The protein localises to the cytoplasm. It is found in the nucleus. It carries out the reaction O-phospho-L-seryl-[protein] + H2O = L-seryl-[protein] + phosphate. The catalysed reaction is O-phospho-L-threonyl-[protein] + H2O = L-threonyl-[protein] + phosphate. Required for development, chemotaxis and the expression of numerous genes. This Dictyostelium discoideum (Social amoeba) protein is Serine/threonine-protein phosphatase 4 catalytic subunit (ppp4c).